The following is a 205-amino-acid chain: Histone H1, early embryonic (205 aa).

Disordered stretches follow at residues 1–21 (MAEK…HPPA) and 94–205 (AKAQ…AKSK). Residues 17–91 (AHPPAAEMVA…GASGSFKVNV (75 aa)) form the H15 domain. Residues 98-124 (ASEKAKKEKEKAKLLAQREKAKEKGCS) are compositionally biased toward basic and acidic residues. 2 stretches are compositionally biased toward basic residues: residues 135–150 (PKKV…KPVK) and 157–205 (EKKK…AKSK).

The protein belongs to the histone H1/H5 family.

The protein localises to the nucleus. It localises to the chromosome. Histones H1 are necessary for the condensation of nucleosome chains into higher-order structures. The chain is Histone H1, early embryonic from Strongylocentrotus purpuratus (Purple sea urchin).